We begin with the raw amino-acid sequence, 64 residues long: Putative antitoxin VapB1 (64 aa).

Functionally, possibly the antitoxin component of a type II toxin-antitoxin (TA) system. Its cognate toxin is VapC1 (Potential). This Methanocaldococcus jannaschii (strain ATCC 43067 / DSM 2661 / JAL-1 / JCM 10045 / NBRC 100440) (Methanococcus jannaschii) protein is Putative antitoxin VapB1 (vapB1).